The primary structure comprises 421 residues: ATP-dependent RNA helicase RhlB (421 aa).

Residues 9 to 37 (QKFSDFALHPQVVEALEKKRFYNCTPIQA) carry the Q motif motif. A Helicase ATP-binding domain is found at 40 to 219 (LPLTLAGRDV…FEQMNNAEYV (180 aa)). An ATP-binding site is contributed by 53 to 60 (AQTGTGKT). The short motif at 165 to 168 (DEAD) is the DEAD box element. Residues 245-390 (RLLQTLIEEE…VSKYNPEALM (146 aa)) form the Helicase C-terminal domain. The interval 396–421 (PLRLTRSRPGNGPRRAGAPRNRRRSG) is disordered. Positions 402–414 (SRPGNGPRRAGAP) are enriched in low complexity.

It belongs to the DEAD box helicase family. RhlB subfamily. As to quaternary structure, component of the RNA degradosome, which is a multiprotein complex involved in RNA processing and mRNA degradation.

It is found in the cytoplasm. It catalyses the reaction ATP + H2O = ADP + phosphate + H(+). Functionally, DEAD-box RNA helicase involved in RNA degradation. Has RNA-dependent ATPase activity and unwinds double-stranded RNA. This chain is ATP-dependent RNA helicase RhlB, found in Salmonella dublin (strain CT_02021853).